A 257-amino-acid polypeptide reads, in one-letter code: Transcription factor bHLH55 (257 aa).

In terms of domain architecture, bHLH spans 74–126; that stretch reads NKRAKHKELERQRRQENTSLFKILRYLLPSQYIKGKRSSADHVLEAVNYIKDL.

Homodimer. Expressed in roots, leaves, stems, and flowers.

It is found in the nucleus. This chain is Transcription factor bHLH55 (BHLH55), found in Arabidopsis thaliana (Mouse-ear cress).